A 380-amino-acid polypeptide reads, in one-letter code: Erythronate-4-phosphate dehydrogenase (380 aa).

Substrate is bound by residues Ser-45 and Thr-66. NAD(+)-binding positions include 126–127, Asp-146, Thr-174, 205–207, and Asp-231; these read QV and ASR. The active site involves Arg-207. Residue Glu-236 is part of the active site. Catalysis depends on His-253, which acts as the Proton donor. An NAD(+)-binding site is contributed by Gly-256. Tyr-257 is a binding site for substrate.

This sequence belongs to the D-isomer specific 2-hydroxyacid dehydrogenase family. PdxB subfamily. As to quaternary structure, homodimer.

Its subcellular location is the cytoplasm. The catalysed reaction is 4-phospho-D-erythronate + NAD(+) = (R)-3-hydroxy-2-oxo-4-phosphooxybutanoate + NADH + H(+). The protein operates within cofactor biosynthesis; pyridoxine 5'-phosphate biosynthesis; pyridoxine 5'-phosphate from D-erythrose 4-phosphate: step 2/5. Its function is as follows. Catalyzes the oxidation of erythronate-4-phosphate to 3-hydroxy-2-oxo-4-phosphonooxybutanoate. This chain is Erythronate-4-phosphate dehydrogenase, found in Pseudomonas syringae pv. tomato (strain ATCC BAA-871 / DC3000).